Consider the following 98-residue polypeptide: DNA-binding protein Fis (98 aa).

A DNA-binding region (H-T-H motif) is located at residues 74–93; the sequence is QTRAATMLGINRGTLRKKLK.

It belongs to the transcriptional regulatory Fis family. In terms of assembly, homodimer.

Functionally, activates ribosomal RNA transcription. Plays a direct role in upstream activation of rRNA promoters. This is DNA-binding protein Fis from Mannheimia haemolytica (Pasteurella haemolytica).